A 790-amino-acid chain; its full sequence is Lon protease (790 aa).

A Lon N-terminal domain is found at L23 to L220. G372–T379 lines the ATP pocket. In terms of domain architecture, Lon proteolytic spans I608 to R789. Catalysis depends on residues S695 and K738.

The protein belongs to the peptidase S16 family. Homohexamer. Organized in a ring with a central cavity.

It is found in the cytoplasm. It carries out the reaction Hydrolysis of proteins in presence of ATP.. In terms of biological role, ATP-dependent serine protease that mediates the selective degradation of mutant and abnormal proteins as well as certain short-lived regulatory proteins. Required for cellular homeostasis and for survival from DNA damage and developmental changes induced by stress. Degrades polypeptides processively to yield small peptide fragments that are 5 to 10 amino acids long. Binds to DNA in a double-stranded, site-specific manner. The chain is Lon protease from Syntrophus aciditrophicus (strain SB).